Reading from the N-terminus, the 208-residue chain is CASP-like protein 2U9 (208 aa).

Topologically, residues 1–27 (MGVADAPSPGNVPVLGDMKNRSAAEMK) are cytoplasmic. Residues 28 to 48 (ISVLALRALTLVLLVIALALM) form a helical membrane-spanning segment. At 49 to 87 (VSNKQTQSIPIKLPGMASTIFLKKTATFSQITGVQYYVG) the chain is on the extracellular side. A helical membrane pass occupies residues 88–108 (ALSVAVAYMFFQMLAGLFTIL). Topologically, residues 109 to 120 (TTGSIVGSKSRA) are cytoplasmic. The helical transmembrane segment at 121–141 (WVTFILDQLIAYLMVSAATVV) threads the bilayer. The Extracellular portion of the chain corresponds to 142–168 (AEVGYIARRGETKVGWNQVCSDFKHYC). Residues 169-189 (FIYGFSLVNAFLATIAFLPVV) form a helical membrane-spanning segment. At 190 to 208 (AVSAFHLFRMYGAQSAQSK) the chain is on the cytoplasmic side.

The protein belongs to the Casparian strip membrane proteins (CASP) family. In terms of assembly, homodimer and heterodimers.

It localises to the cell membrane. In Selaginella moellendorffii (Spikemoss), this protein is CASP-like protein 2U9.